A 231-amino-acid polypeptide reads, in one-letter code: 7-cyano-7-deazaguanine synthase (231 aa).

8 to 18 (FSGGQDSTTCL) provides a ligand contact to ATP. Residues Cys188, Cys197, Cys200, and Cys203 each contribute to the Zn(2+) site.

It belongs to the QueC family. It depends on Zn(2+) as a cofactor.

The enzyme catalyses 7-carboxy-7-deazaguanine + NH4(+) + ATP = 7-cyano-7-deazaguanine + ADP + phosphate + H2O + H(+). Its pathway is purine metabolism; 7-cyano-7-deazaguanine biosynthesis. Its function is as follows. Catalyzes the ATP-dependent conversion of 7-carboxy-7-deazaguanine (CDG) to 7-cyano-7-deazaguanine (preQ(0)). The sequence is that of 7-cyano-7-deazaguanine synthase from Escherichia coli O1:K1 / APEC.